The primary structure comprises 166 residues: MMYFVYLLSILLVLGFMAFASKPSPIYGGLSLVLSGGVGCGIVVSLGGSFLGLIVFLVYLGGMLVVFGYTAAMATEEYPETWVDSTVFTNLLIMVGMLGVIWYYFSGEVDLSINYDLLDLGGVEVLGGDYNGVSLLSACGGWELIFSGWILFLTIFVVLEVTRGEH.

Transmembrane regions (helical) follow at residues 1-21, 26-46, 47-67, 87-107, and 139-159; these read MMYFVYLLSILLVLGFMAFAS, IYGGLSLVLSGGVGCGIVVSL, GGSFLGLIVFLVYLGGMLVVF, VFTNLLIMVGMLGVIWYYFSG, and CGGWELIFSGWILFLTIFVVL.

It belongs to the complex I subunit 6 family. In terms of assembly, core subunit of respiratory chain NADH dehydrogenase (Complex I) which is composed of 45 different subunits.

Its subcellular location is the mitochondrion inner membrane. The enzyme catalyses a ubiquinone + NADH + 5 H(+)(in) = a ubiquinol + NAD(+) + 4 H(+)(out). Its function is as follows. Core subunit of the mitochondrial membrane respiratory chain NADH dehydrogenase (Complex I) which catalyzes electron transfer from NADH through the respiratory chain, using ubiquinone as an electron acceptor. Essential for the catalytic activity and assembly of complex I. This chain is NADH-ubiquinone oxidoreductase chain 6 (MT-ND6), found in Ornithorhynchus anatinus (Duckbill platypus).